The primary structure comprises 359 residues: UDP-3-O-acylglucosamine N-acyltransferase (359 aa).

Histidine 253 (proton acceptor) is an active-site residue.

The protein belongs to the transferase hexapeptide repeat family. LpxD subfamily. Homotrimer.

It catalyses the reaction a UDP-3-O-[(3R)-3-hydroxyacyl]-alpha-D-glucosamine + a (3R)-hydroxyacyl-[ACP] = a UDP-2-N,3-O-bis[(3R)-3-hydroxyacyl]-alpha-D-glucosamine + holo-[ACP] + H(+). The protein operates within bacterial outer membrane biogenesis; LPS lipid A biosynthesis. In terms of biological role, catalyzes the N-acylation of UDP-3-O-acylglucosamine using 3-hydroxyacyl-ACP as the acyl donor. Is involved in the biosynthesis of lipid A, a phosphorylated glycolipid that anchors the lipopolysaccharide to the outer membrane of the cell. This Burkholderia lata (strain ATCC 17760 / DSM 23089 / LMG 22485 / NCIMB 9086 / R18194 / 383) protein is UDP-3-O-acylglucosamine N-acyltransferase.